Consider the following 283-residue polypeptide: Pantothenate synthetase (283 aa).

30–37 (MGNLHDGH) contributes to the ATP binding site. Histidine 37 (proton donor) is an active-site residue. (R)-pantoate is bound at residue glutamine 61. Glutamine 61 is a binding site for beta-alanine. Residue 149 to 152 (GEKD) coordinates ATP. Residue glutamine 155 participates in (R)-pantoate binding. 186-189 (LSSR) contacts ATP.

This sequence belongs to the pantothenate synthetase family. As to quaternary structure, homodimer.

The protein localises to the cytoplasm. The enzyme catalyses (R)-pantoate + beta-alanine + ATP = (R)-pantothenate + AMP + diphosphate + H(+). Its pathway is cofactor biosynthesis; (R)-pantothenate biosynthesis; (R)-pantothenate from (R)-pantoate and beta-alanine: step 1/1. Catalyzes the condensation of pantoate with beta-alanine in an ATP-dependent reaction via a pantoyl-adenylate intermediate. In Escherichia coli O17:K52:H18 (strain UMN026 / ExPEC), this protein is Pantothenate synthetase.